Reading from the N-terminus, the 406-residue chain is MSQPITRENFDEWMIPVYAPAPFIPVRGEGSRLWDQQGKEYIDFAGGIAVNALGHAHPELREALNEQASKFWHTGNGYTNEPVLRLAKKLIDATFADRVFFCNSGAEANEAALKLARKFAHDRYGSHKSGIVAFKNAFHGRTLFTVSAGGQPAYSQDFAPLPADIRHAAYNDINSASALIDDSTCAVIVEPIQGEGGVVPASNAFLQGLRELCNRHNALLIFDEVQTGVGRTGELYAYMHYGVTPDLLTTAKALGGGFPVGALLATEECARVMTVGTHGTTYGGNPLASAVAGKVLELINTPEMLNGVKQRHDWFVERLNTINHRYGLFSEVRGLGLLIGCVLNADYAGQAKQISQEAAKAGVMVLIAGGNVVRFAPALNVSEEEVTTGLDRFAAACEHFVSRGSS.

At lysine 252 the chain carries N6-(pyridoxal phosphate)lysine.

It belongs to the class-III pyridoxal-phosphate-dependent aminotransferase family. AstC subfamily. Requires pyridoxal 5'-phosphate as cofactor.

The enzyme catalyses N(2)-succinyl-L-ornithine + 2-oxoglutarate = N-succinyl-L-glutamate 5-semialdehyde + L-glutamate. It functions in the pathway amino-acid degradation; L-arginine degradation via AST pathway; L-glutamate and succinate from L-arginine: step 3/5. Catalyzes the transamination of N(2)-succinylornithine and alpha-ketoglutarate into N(2)-succinylglutamate semialdehyde and glutamate. Can also act as an acetylornithine aminotransferase. This is Succinylornithine transaminase from Escherichia coli O139:H28 (strain E24377A / ETEC).